The primary structure comprises 371 residues: Putative RING finger protein ORF117 (371 aa).

An RING-type zinc finger spans residues 72–108; it reads CCICFRKDVIYKEVPCGHYICVECYKEPIRNVCPECN. A compositionally biased stretch (acidic residues) spans 178 to 192; the sequence is EEEMNESEAEEEEPV. The tract at residues 178 to 218 is disordered; it reads EEEMNESEAEEEEPVPEIAQFEALNTPPPPPTNRRPKIRRP.

This is Putative RING finger protein ORF117 from Magallana gigas (Pacific oyster).